The sequence spans 388 residues: Succinate--CoA ligase [ADP-forming] subunit beta (388 aa).

The 236-residue stretch at 9 to 244 (KQLFAEYGLP…PSQDDPREAH (236 aa)) folds into the ATP-grasp domain. ATP is bound by residues Lys-46, 53-55 (GRG), Glu-99, Thr-102, and Glu-107. Mg(2+) contacts are provided by Asn-199 and Asp-213. Residues Asn-264 and 321 to 323 (GIV) contribute to the substrate site.

It belongs to the succinate/malate CoA ligase beta subunit family. As to quaternary structure, heterotetramer of two alpha and two beta subunits. The cofactor is Mg(2+).

It carries out the reaction succinate + ATP + CoA = succinyl-CoA + ADP + phosphate. It catalyses the reaction GTP + succinate + CoA = succinyl-CoA + GDP + phosphate. Its pathway is carbohydrate metabolism; tricarboxylic acid cycle; succinate from succinyl-CoA (ligase route): step 1/1. In terms of biological role, succinyl-CoA synthetase functions in the citric acid cycle (TCA), coupling the hydrolysis of succinyl-CoA to the synthesis of either ATP or GTP and thus represents the only step of substrate-level phosphorylation in the TCA. The beta subunit provides nucleotide specificity of the enzyme and binds the substrate succinate, while the binding sites for coenzyme A and phosphate are found in the alpha subunit. The protein is Succinate--CoA ligase [ADP-forming] subunit beta of Pseudomonas fluorescens (strain Pf0-1).